The sequence spans 695 residues: Elongation factor G 2 (695 aa).

One can recognise a tr-type G domain in the interval Ser5 to Thr280. Residues Ala14–Thr21, Asp78–His82, and Asn132–Asp135 each bind GTP.

It belongs to the TRAFAC class translation factor GTPase superfamily. Classic translation factor GTPase family. EF-G/EF-2 subfamily.

It localises to the cytoplasm. Functionally, catalyzes the GTP-dependent ribosomal translocation step during translation elongation. During this step, the ribosome changes from the pre-translocational (PRE) to the post-translocational (POST) state as the newly formed A-site-bound peptidyl-tRNA and P-site-bound deacylated tRNA move to the P and E sites, respectively. Catalyzes the coordinated movement of the two tRNA molecules, the mRNA and conformational changes in the ribosome. This Vibrio cholerae serotype O1 (strain ATCC 39315 / El Tor Inaba N16961) protein is Elongation factor G 2.